The chain runs to 658 residues: DNA mismatch repair protein MutL (658 aa).

Basic and acidic residues predominate over residues 114–130 (RQEDSSHATQVKAEDGK). 2 disordered regions span residues 114–137 (RQEDSSHATQVKAEDGKLSSPTAA) and 369–391 (DYPTGNKPDTRNAFGSSGKTAPM).

Belongs to the DNA mismatch repair MutL/HexB family.

This protein is involved in the repair of mismatches in DNA. It is required for dam-dependent methyl-directed DNA mismatch repair. May act as a 'molecular matchmaker', a protein that promotes the formation of a stable complex between two or more DNA-binding proteins in an ATP-dependent manner without itself being part of a final effector complex. The sequence is that of DNA mismatch repair protein MutL from Neisseria meningitidis serogroup C (strain 053442).